The sequence spans 598 residues: Peroxisomal targeting signal receptor (598 aa).

Disordered regions lie at residues 1–54 (MSFM…GEMS), 135–154 (RGGS…MQGG), and 208–237 (AVGK…TTTE). The span at 9-22 (ECSTGRNPLSQFTK) shows a compositional bias: polar residues. Residue C10 forms a Glycyl cysteine thioester (Cys-Gly) (interchain with G-Cter in ubiquitin) linkage. K22 is covalently cross-linked (Glycyl lysine isopeptide (Lys-Gly) (interchain with G-Cter in ubiquitin)). Residues 23 to 35 (HTAEDRSLQHDRV) are compositionally biased toward basic and acidic residues. Residues 220 to 233 (AETATATETVTETE) show a composition bias toward low complexity. 7 TPR repeats span residues 304 to 337 (PDPF…NTEH), 338 to 371 (AEAW…EPGN), 372 to 409 (LSAL…VVDQ), 410 to 447 (ARNQ…ANID), 448 to 481 (ADVQ…RPDD), 482 to 515 (ALLW…RPSF), and 516 to 549 (VRAR…HKVE).

The protein belongs to the peroxisomal targeting signal receptor family. Ubiquitination at Cys-10 is UBC4-independent but requires the presence of PEX4. Ubiquitination at Lys-22 is UBC4-dependent.

It is found in the cytoplasm. The protein localises to the peroxisome membrane. Functionally, binds to the C-terminal PTS1-type tripeptide peroxisomal targeting signal (SKL-type) and plays an essential role in peroxisomal protein import. The chain is Peroxisomal targeting signal receptor (PAY32) from Yarrowia lipolytica (strain CLIB 122 / E 150) (Yeast).